A 369-amino-acid chain; its full sequence is Anhydro-N-acetylmuramic acid kinase (369 aa).

An ATP-binding site is contributed by 12 to 19; sequence GTSMDGVD.

The protein belongs to the anhydro-N-acetylmuramic acid kinase family.

The enzyme catalyses 1,6-anhydro-N-acetyl-beta-muramate + ATP + H2O = N-acetyl-D-muramate 6-phosphate + ADP + H(+). It functions in the pathway amino-sugar metabolism; 1,6-anhydro-N-acetylmuramate degradation. The protein operates within cell wall biogenesis; peptidoglycan recycling. In terms of biological role, catalyzes the specific phosphorylation of 1,6-anhydro-N-acetylmuramic acid (anhMurNAc) with the simultaneous cleavage of the 1,6-anhydro ring, generating MurNAc-6-P. Is required for the utilization of anhMurNAc either imported from the medium or derived from its own cell wall murein, and thus plays a role in cell wall recycling. The chain is Anhydro-N-acetylmuramic acid kinase from Shewanella loihica (strain ATCC BAA-1088 / PV-4).